Reading from the N-terminus, the 499-residue chain is Lysine--tRNA ligase (499 aa).

Glutamate 408 and glutamate 415 together coordinate Mg(2+).

Belongs to the class-II aminoacyl-tRNA synthetase family. As to quaternary structure, homodimer. Requires Mg(2+) as cofactor.

The protein localises to the cytoplasm. It carries out the reaction tRNA(Lys) + L-lysine + ATP = L-lysyl-tRNA(Lys) + AMP + diphosphate. The polypeptide is Lysine--tRNA ligase (Bacillus cereus (strain ATCC 10987 / NRS 248)).